The chain runs to 307 residues: UDP-3-O-acyl-N-acetylglucosamine deacetylase (307 aa).

Zn(2+) is bound by residues His-78, His-241, and Asp-245. The Proton donor role is filled by His-268.

It belongs to the LpxC family. The cofactor is Zn(2+).

It carries out the reaction a UDP-3-O-[(3R)-3-hydroxyacyl]-N-acetyl-alpha-D-glucosamine + H2O = a UDP-3-O-[(3R)-3-hydroxyacyl]-alpha-D-glucosamine + acetate. It functions in the pathway glycolipid biosynthesis; lipid IV(A) biosynthesis; lipid IV(A) from (3R)-3-hydroxytetradecanoyl-[acyl-carrier-protein] and UDP-N-acetyl-alpha-D-glucosamine: step 2/6. Its function is as follows. Catalyzes the hydrolysis of UDP-3-O-myristoyl-N-acetylglucosamine to form UDP-3-O-myristoylglucosamine and acetate, the committed step in lipid A biosynthesis. In Acidovorax ebreus (strain TPSY) (Diaphorobacter sp. (strain TPSY)), this protein is UDP-3-O-acyl-N-acetylglucosamine deacetylase.